The chain runs to 376 residues: Succinyl-diaminopimelate desuccinylase (376 aa).

Residue H66 participates in Zn(2+) binding. D68 is a catalytic residue. A Zn(2+)-binding site is contributed by D99. The active-site Proton acceptor is E133. Positions 134, 162, and 348 each coordinate Zn(2+).

This sequence belongs to the peptidase M20A family. DapE subfamily. As to quaternary structure, homodimer. Zn(2+) serves as cofactor. The cofactor is Co(2+).

The enzyme catalyses N-succinyl-(2S,6S)-2,6-diaminopimelate + H2O = (2S,6S)-2,6-diaminopimelate + succinate. The protein operates within amino-acid biosynthesis; L-lysine biosynthesis via DAP pathway; LL-2,6-diaminopimelate from (S)-tetrahydrodipicolinate (succinylase route): step 3/3. Its function is as follows. Catalyzes the hydrolysis of N-succinyl-L,L-diaminopimelic acid (SDAP), forming succinate and LL-2,6-diaminopimelate (DAP), an intermediate involved in the bacterial biosynthesis of lysine and meso-diaminopimelic acid, an essential component of bacterial cell walls. This chain is Succinyl-diaminopimelate desuccinylase, found in Xanthomonas oryzae pv. oryzae (strain PXO99A).